The chain runs to 205 residues: Small ribosomal subunit protein uS4 (205 aa).

The 64-residue stretch at 94-157 (SRLDTVVYRM…KQIPLIQESV (64 aa)) folds into the S4 RNA-binding domain.

The protein belongs to the universal ribosomal protein uS4 family. As to quaternary structure, part of the 30S ribosomal subunit. Contacts protein S5. The interaction surface between S4 and S5 is involved in control of translational fidelity.

Its function is as follows. One of the primary rRNA binding proteins, it binds directly to 16S rRNA where it nucleates assembly of the body of the 30S subunit. With S5 and S12 plays an important role in translational accuracy. This is Small ribosomal subunit protein uS4 from Rickettsia conorii (strain ATCC VR-613 / Malish 7).